Here is a 311-residue protein sequence, read N- to C-terminus: MANPLYQKHIISINDLSRDDLNLVLATAAKLKANPQPELLKHKVIASCFFEASTRTRLSFETSMHRLGASVVGFSDSANTSLGKKGETLADTISVISTYVDAIVMRHPQEGAARLATEFSGNVPVLNAGDGANQHPTQTLLDLFTIQETQGRLDNLNIAMVGDLKYGRTVHSLTQALAKFDGNRFYFIAPDALAMPQYILDMLDEKGIAWSLHSAIEEVMAEVDILYMTRVQKERLDPSEYANVKAQFVLRASDLNGARENMKVLHPLPRIDEITTDVDKTPHAWYFQQAGNGIFARQALLALVLNSDLAL.

Carbamoyl phosphate is bound by residues arginine 55 and threonine 56. Position 85 (lysine 85) interacts with L-aspartate. Arginine 106, histidine 135, and glutamine 138 together coordinate carbamoyl phosphate. The L-aspartate site is built by arginine 168 and arginine 230. The carbamoyl phosphate site is built by leucine 268 and proline 269.

It belongs to the aspartate/ornithine carbamoyltransferase superfamily. ATCase family. Heterododecamer (2C3:3R2) of six catalytic PyrB chains organized as two trimers (C3), and six regulatory PyrI chains organized as three dimers (R2).

The catalysed reaction is carbamoyl phosphate + L-aspartate = N-carbamoyl-L-aspartate + phosphate + H(+). The protein operates within pyrimidine metabolism; UMP biosynthesis via de novo pathway; (S)-dihydroorotate from bicarbonate: step 2/3. Functionally, catalyzes the condensation of carbamoyl phosphate and aspartate to form carbamoyl aspartate and inorganic phosphate, the committed step in the de novo pyrimidine nucleotide biosynthesis pathway. This Citrobacter koseri (strain ATCC BAA-895 / CDC 4225-83 / SGSC4696) protein is Aspartate carbamoyltransferase catalytic subunit.